Here is a 310-residue protein sequence, read N- to C-terminus: tRNA dimethylallyltransferase (310 aa).

Residue 11–18 (GPTAVGKT) coordinates ATP. 13–18 (TAVGKT) contacts substrate. The interaction with substrate tRNA stretch occupies residues 36 to 39 (DSMQ).

This sequence belongs to the IPP transferase family. As to quaternary structure, monomer. Mg(2+) serves as cofactor.

It catalyses the reaction adenosine(37) in tRNA + dimethylallyl diphosphate = N(6)-dimethylallyladenosine(37) in tRNA + diphosphate. In terms of biological role, catalyzes the transfer of a dimethylallyl group onto the adenine at position 37 in tRNAs that read codons beginning with uridine, leading to the formation of N6-(dimethylallyl)adenosine (i(6)A). The polypeptide is tRNA dimethylallyltransferase (Shouchella clausii (strain KSM-K16) (Alkalihalobacillus clausii)).